A 627-amino-acid polypeptide reads, in one-letter code: Anti-CBASS protein Acb1 (627 aa).

Y105 contributes to the 3',3'-cGAMP binding site. A 3',3'-cUAMP-binding site is contributed by Y105. The disordered stretch occupies residues L437 to P474. Residues H508, T510, H584, and T586 contribute to the active site. E614 and W620 together coordinate 3',3'-cGAMP. 3',3'-cUAMP contacts are provided by E614 and W620.

Belongs to the anti-CBASS protein Acb1 family.

It catalyses the reaction 3',3'-cUAMP + H2O = U[3'-5']pAp[3'] + H(+). The catalysed reaction is 3',3',3'-c-tri-AMP + H2O = A[3'-5']pA[3'-5']pAp[3'] + H(+). The enzyme catalyses 3',3',3'-cAAG + H2O = G[3'-5']pA[3'-5']pAp[3'] + H(+). It carries out the reaction 3',3',3'-cAAG + H2O = A[3'-5']pG[3'-5']pAp[3'] + H(+). It catalyses the reaction 3',3'-cGAMP + H2O = G[3'-5']pAp[3'] + H(+). Counteracts or regulates the endogenous CBASS antiviral defense system. Phosphodiesterase that enables metal-independent hydrolysis of the host cyclic di- and trinucleotide CBASS signals such as 3'3'-cGAMP, 3'3'cUA, and 3'3'3'-cAAA. The polypeptide is Anti-CBASS protein Acb1 (Caulobacter sp. (strain RHG1)).